We begin with the raw amino-acid sequence, 615 residues long: DNA mismatch repair protein MutL (615 aa).

Residues 362–397 form a disordered region; that stretch reads HFAEPAVREPVAPRYSPAPASGSRPAASWPNAQPGY. The span at 373-391 shows a compositional bias: low complexity; sequence APRYSPAPASGSRPAASWP.

This sequence belongs to the DNA mismatch repair MutL/HexB family.

In terms of biological role, this protein is involved in the repair of mismatches in DNA. It is required for dam-dependent methyl-directed DNA mismatch repair. May act as a 'molecular matchmaker', a protein that promotes the formation of a stable complex between two or more DNA-binding proteins in an ATP-dependent manner without itself being part of a final effector complex. The chain is DNA mismatch repair protein MutL from Escherichia coli O6:H1 (strain CFT073 / ATCC 700928 / UPEC).